A 180-amino-acid chain; its full sequence is Shikimate kinase (180 aa).

14-19 provides a ligand contact to ATP; that stretch reads GAGKSC. Serine 18 is a Mg(2+) binding site. Residues aspartate 36, arginine 60, and glycine 82 each coordinate substrate. Arginine 120 is a binding site for ATP. Arginine 139 contributes to the substrate binding site.

It belongs to the shikimate kinase family. As to quaternary structure, monomer. Requires Mg(2+) as cofactor.

It is found in the cytoplasm. The catalysed reaction is shikimate + ATP = 3-phosphoshikimate + ADP + H(+). Its pathway is metabolic intermediate biosynthesis; chorismate biosynthesis; chorismate from D-erythrose 4-phosphate and phosphoenolpyruvate: step 5/7. Its function is as follows. Catalyzes the specific phosphorylation of the 3-hydroxyl group of shikimic acid using ATP as a cosubstrate. The sequence is that of Shikimate kinase from Xanthomonas euvesicatoria pv. vesicatoria (strain 85-10) (Xanthomonas campestris pv. vesicatoria).